Here is a 173-residue protein sequence, read N- to C-terminus: RNA pyrophosphohydrolase (173 aa).

The 144-residue stretch at 6-149 (GFRANVGIII…KRDVYRKVMK (144 aa)) folds into the Nudix hydrolase domain. Positions 38-59 (GGVDDGETPEEAMYRELYEEVG) match the Nudix box motif.

This sequence belongs to the Nudix hydrolase family. RppH subfamily. It depends on a divalent metal cation as a cofactor.

Functionally, accelerates the degradation of transcripts by removing pyrophosphate from the 5'-end of triphosphorylated RNA, leading to a more labile monophosphorylated state that can stimulate subsequent ribonuclease cleavage. This Shewanella woodyi (strain ATCC 51908 / MS32) protein is RNA pyrophosphohydrolase.